A 337-amino-acid polypeptide reads, in one-letter code: Anthranilate phosphoribosyltransferase (337 aa).

5-phospho-alpha-D-ribose 1-diphosphate is bound by residues glycine 80, 83–84 (GD), threonine 88, 90–93 (NIST), 108–116 (KHGNRAVSS), and serine 120. Glycine 80 is an anthranilate binding site. Serine 92 contacts Mg(2+). Asparagine 111 provides a ligand contact to anthranilate. Arginine 166 is a binding site for anthranilate. Mg(2+)-binding residues include aspartate 224 and glutamate 225.

Belongs to the anthranilate phosphoribosyltransferase family. In terms of assembly, homodimer. The cofactor is Mg(2+).

The enzyme catalyses N-(5-phospho-beta-D-ribosyl)anthranilate + diphosphate = 5-phospho-alpha-D-ribose 1-diphosphate + anthranilate. It functions in the pathway amino-acid biosynthesis; L-tryptophan biosynthesis; L-tryptophan from chorismate: step 2/5. Catalyzes the transfer of the phosphoribosyl group of 5-phosphorylribose-1-pyrophosphate (PRPP) to anthranilate to yield N-(5'-phosphoribosyl)-anthranilate (PRA). This is Anthranilate phosphoribosyltransferase from Anaeromyxobacter sp. (strain K).